Reading from the N-terminus, the 320-residue chain is NAC domain-containing protein 20 (320 aa).

In terms of domain architecture, NAC spans 14–170; sequence LPPGFRFHPT…DWAVCRIFHK (157 aa). The DNA-binding element occupies 114 to 176; that stretch reads IGMKKTLVFY…IFHKSSGIKK (63 aa).

As to quaternary structure, forms homodimers. Forms heterodimers with NAC26. In terms of tissue distribution, expressed in developing seeds.

It localises to the nucleus. Its subcellular location is the endoplasmic reticulum. Functionally, transcription factor that acts redundantly with NAC26 to regulate the expression of genes involved in the biosynthesis of starch and storage proteins in grain. Directly binds to the promoters of starch synthase 1 (SS1), pullulanase (PUL), glutelin A1 (GLUA1), glutelins B4 and B5 (GLUB4 and GLUB5), alpha-globulin and 16 kDa prolamin, and activates their expression. Possesses transactivation activity in yeast. This chain is NAC domain-containing protein 20, found in Oryza sativa subsp. indica (Rice).